Reading from the N-terminus, the 375-residue chain is Guanine nucleotide-binding protein subunit beta (375 aa).

7 WD repeats span residues 63 to 93 (GHTGKVYSLDWTPEKNRIVSASQDGRLIVWN), 105 to 135 (LPCAWVMTCAFSPSGQSVACGGLDSVCSIYN), 154 to 185 (GHKGYVSSCQYVPDEDTHLITSSGDQTCVLWD), 202 to 233 (GHTADVQSVSISSSNPRLFVSGSCDTTARLWD), 246 to 276 (GHEGDVNTVKFFPDGNRFGTGSEDGTCRLFD), 293 to 323 (GDIPHVTSMAFSISGRLLFVGYSNGDCYVWD), and 339 to 369 (SHEGRISCLGLSADGSALCTGSWDTNLKIWA).

It belongs to the WD repeat G protein beta family. G proteins are composed of 3 units, alpha, beta and gamma.

In terms of biological role, guanine nucleotide-binding proteins (G proteins) are involved as a modulator or transducer in various transmembrane signaling systems. The beta and gamma chains are required for the GTPase activity, for replacement of GDP by GTP, and for G protein-effector interaction. In Nicotiana tabacum (Common tobacco), this protein is Guanine nucleotide-binding protein subunit beta.